Consider the following 212-residue polypeptide: Octanoyltransferase (212 aa).

Residues 31–209 (AETQDEIWLV…HFADLLGYNI (179 aa)) enclose the BPL/LPL catalytic domain. Substrate is bound by residues 70–77 (RGGQITYH), 138–140 (SLG), and 151–153 (GLA). Residue cysteine 169 is the Acyl-thioester intermediate of the active site.

Belongs to the LipB family.

The protein localises to the cytoplasm. It carries out the reaction octanoyl-[ACP] + L-lysyl-[protein] = N(6)-octanoyl-L-lysyl-[protein] + holo-[ACP] + H(+). It participates in protein modification; protein lipoylation via endogenous pathway; protein N(6)-(lipoyl)lysine from octanoyl-[acyl-carrier-protein]: step 1/2. Its function is as follows. Catalyzes the transfer of endogenously produced octanoic acid from octanoyl-acyl-carrier-protein onto the lipoyl domains of lipoate-dependent enzymes. Lipoyl-ACP can also act as a substrate although octanoyl-ACP is likely to be the physiological substrate. This is Octanoyltransferase from Haemophilus influenzae (strain PittGG).